Reading from the N-terminus, the 501-residue chain is Putative matrix metalloproteinase (501 aa).

An N-terminal signal peptide occupies residues 1-26 (MMPQYERKQIIIHISCVIICVVVTLT). 6 N-linked (GlcNAc...) asparagine; by host glycosylation sites follow: Asn48, Asn58, Asn61, Asn94, Asn116, and Asn163. Residue His179 participates in Zn(2+) binding. Glu180 is an active-site residue. Zn(2+) contacts are provided by His183 and His189. Asn192, Asn267, Asn280, and Asn291 each carry an N-linked (GlcNAc...) asparagine; by host glycan. The Hemopexin repeat unit spans residues 311-356 (TGHIDTISVIRGELYIFVDEYHWRFRSNGLLYSGYPLKTTHSWSVP). N-linked (GlcNAc...) asparagine; by host glycosylation is found at Asn379 and Asn493.

Belongs to the peptidase M10A family. Zn(2+) is required as a cofactor.

The sequence is that of Putative matrix metalloproteinase from Trichoplusia ni ascovirus 2c (TnAV-2c).